The sequence spans 533 residues: Putative replication factor C large subunit (533 aa).

Positions 1–11 (MSKTAKNTKTI) are enriched in polar residues. The interval 1 to 31 (MSKTAKNTKTIKSVKSVNKDNKPNKDNKDDK) is disordered. Residues 17 to 31 (VNKDNKPNKDNKDDK) are compositionally biased toward basic and acidic residues.

The protein belongs to the activator 1 large subunit family.

Part of the RFC clamp loader complex which loads the PCNA sliding clamp onto DNA. The sequence is that of Putative replication factor C large subunit from Acanthamoeba polyphaga (Amoeba).